Consider the following 233-residue polypeptide: UPF0758 protein RoseRS_0767 (233 aa).

Positions 107 to 229 (LIRSPTDAAQ…FVSMRERGLG (123 aa)) constitute an MPN domain. Histidine 178, histidine 180, and aspartate 191 together coordinate Zn(2+). The short motif at 178–191 (HNHPSGDPTPSPED) is the JAMM motif element.

The protein belongs to the UPF0758 family.

This is UPF0758 protein RoseRS_0767 from Roseiflexus sp. (strain RS-1).